We begin with the raw amino-acid sequence, 547 residues long: DNA mismatch repair protein MutL (547 aa).

Belongs to the DNA mismatch repair MutL/HexB family.

This protein is involved in the repair of mismatches in DNA. It is required for dam-dependent methyl-directed DNA mismatch repair. May act as a 'molecular matchmaker', a protein that promotes the formation of a stable complex between two or more DNA-binding proteins in an ATP-dependent manner without itself being part of a final effector complex. The protein is DNA mismatch repair protein MutL of Deinococcus radiodurans (strain ATCC 13939 / DSM 20539 / JCM 16871 / CCUG 27074 / LMG 4051 / NBRC 15346 / NCIMB 9279 / VKM B-1422 / R1).